Consider the following 209-residue polypeptide: Ribosomal RNA large subunit methyltransferase E (209 aa).

Residues Gly-60, Trp-62, Asp-80, Asp-96, and Asp-121 each coordinate S-adenosyl-L-methionine. Lys-161 acts as the Proton acceptor in catalysis. The span at 182-196 (VQMRKPSSSRDRSRE) shows a compositional bias: basic and acidic residues. The disordered stretch occupies residues 182 to 209 (VQMRKPSSSRDRSREQYLLGRGFRGRSE).

The protein belongs to the class I-like SAM-binding methyltransferase superfamily. RNA methyltransferase RlmE family.

It localises to the cytoplasm. It carries out the reaction uridine(2552) in 23S rRNA + S-adenosyl-L-methionine = 2'-O-methyluridine(2552) in 23S rRNA + S-adenosyl-L-homocysteine + H(+). In terms of biological role, specifically methylates the uridine in position 2552 of 23S rRNA at the 2'-O position of the ribose in the fully assembled 50S ribosomal subunit. This Pseudomonas fluorescens (strain ATCC BAA-477 / NRRL B-23932 / Pf-5) protein is Ribosomal RNA large subunit methyltransferase E.